A 236-amino-acid chain; its full sequence is Purine nucleoside phosphorylase DeoD-type (236 aa).

His5 lines the a purine D-ribonucleoside pocket. Phosphate-binding positions include Gly21, Arg25, Arg44, and 88–91 (RIGS). Residues 180–182 (EME) and 204–205 (SD) contribute to the a purine D-ribonucleoside site. Residue Asp205 is the Proton donor of the active site.

It belongs to the PNP/UDP phosphorylase family. Homohexamer; trimer of homodimers.

The enzyme catalyses a purine D-ribonucleoside + phosphate = a purine nucleobase + alpha-D-ribose 1-phosphate. The catalysed reaction is a purine 2'-deoxy-D-ribonucleoside + phosphate = a purine nucleobase + 2-deoxy-alpha-D-ribose 1-phosphate. In terms of biological role, catalyzes the reversible phosphorolytic breakdown of the N-glycosidic bond in the beta-(deoxy)ribonucleoside molecules, with the formation of the corresponding free purine bases and pentose-1-phosphate. The polypeptide is Purine nucleoside phosphorylase DeoD-type (Hahella chejuensis (strain KCTC 2396)).